We begin with the raw amino-acid sequence, 238 residues long: Doublecortin domain-containing protein (238 aa).

Residues 82–112 form a partial p25alpha domain region; sequence VFERLNDKQFYTGVQKTKFMELLKNNKNKSS. In terms of domain architecture, Doublecortin spans 151–232; that stretch reads KTIFLFNNEK…GDPPAPIRNL (82 aa).

As to quaternary structure, interacts with alpha-tubulin 1 and beta-tubulin; the interaction stabilizes microtubule assembly.

It is found in the cytoplasm. The protein localises to the cytoskeleton. Functionally, involved in the stabilization of microtubules. Probably by controlling microtubules stabilization, plays a role in invasion, microneme secretion and parasite growth in host erythrocytes. The polypeptide is Doublecortin domain-containing protein (Plasmodium falciparum (isolate 3D7)).